The following is a 355-amino-acid chain: Anthranilate phosphoribosyltransferase (355 aa).

5-phospho-alpha-D-ribose 1-diphosphate is bound by residues G102, G105 to D106, S110, N112 to T115, K130 to S138, and S142. G102 is a binding site for anthranilate. S114 lines the Mg(2+) pocket. Residue N133 participates in anthranilate binding. An anthranilate-binding site is contributed by R188. Residues D246 and E247 each coordinate Mg(2+).

Belongs to the anthranilate phosphoribosyltransferase family. In terms of assembly, homodimer. The cofactor is Mg(2+).

The enzyme catalyses N-(5-phospho-beta-D-ribosyl)anthranilate + diphosphate = 5-phospho-alpha-D-ribose 1-diphosphate + anthranilate. It participates in amino-acid biosynthesis; L-tryptophan biosynthesis; L-tryptophan from chorismate: step 2/5. Functionally, catalyzes the transfer of the phosphoribosyl group of 5-phosphorylribose-1-pyrophosphate (PRPP) to anthranilate to yield N-(5'-phosphoribosyl)-anthranilate (PRA). This Pectobacterium carotovorum subsp. carotovorum (strain PC1) protein is Anthranilate phosphoribosyltransferase.